A 341-amino-acid chain; its full sequence is ATPase GET3 (341 aa).

34–41 contributes to the ATP binding site; the sequence is KGGVGKTT. Residue Asp63 is part of the active site. ATP contacts are provided by Glu245 and Asn272. 2 residues coordinate Zn(2+): Cys283 and Cys286.

This sequence belongs to the arsA ATPase family. Homodimer.

It localises to the cytoplasm. The protein resides in the endoplasmic reticulum. Its function is as follows. ATPase required for the post-translational delivery of tail-anchored (TA) proteins to the endoplasmic reticulum. Recognizes and selectively binds the transmembrane domain of TA proteins in the cytosol. This complex then targets to the endoplasmic reticulum by membrane-bound receptors, where the tail-anchored protein is released for insertion. This process is regulated by ATP binding and hydrolysis. ATP binding drives the homodimer towards the closed dimer state, facilitating recognition of newly synthesized TA membrane proteins. ATP hydrolysis is required for insertion. Subsequently, the homodimer reverts towards the open dimer state, lowering its affinity for the membrane-bound receptor, and returning it to the cytosol to initiate a new round of targeting. The protein is ATPase GET3 of Paracoccidioides lutzii (strain ATCC MYA-826 / Pb01) (Paracoccidioides brasiliensis).